A 699-amino-acid chain; its full sequence is 4-alpha-glucanotransferase (699 aa).

The protein belongs to the disproportionating enzyme family.

It is found in the cytoplasm. It catalyses the reaction Transfers a segment of a (1-&gt;4)-alpha-D-glucan to a new position in an acceptor, which may be glucose or a (1-&gt;4)-alpha-D-glucan.. The chain is 4-alpha-glucanotransferase (malQ) from Haemophilus influenzae (strain ATCC 51907 / DSM 11121 / KW20 / Rd).